The primary structure comprises 532 residues: Phosphoenolpyruvate carboxykinase (ATP) (532 aa).

Substrate contacts are provided by R60, Y194, and K200. Residues K200, H219, and 237 to 245 (GLSGTGKTT) each bind ATP. Residues K200 and H219 each coordinate Mn(2+). D258 contributes to the Mn(2+) binding site. The ATP site is built by E286, R324, and T449. Residue R324 participates in substrate binding.

The protein belongs to the phosphoenolpyruvate carboxykinase (ATP) family. It depends on Mn(2+) as a cofactor.

It is found in the cytoplasm. It catalyses the reaction oxaloacetate + ATP = phosphoenolpyruvate + ADP + CO2. The protein operates within carbohydrate biosynthesis; gluconeogenesis. Involved in the gluconeogenesis. Catalyzes the conversion of oxaloacetate (OAA) to phosphoenolpyruvate (PEP) through direct phosphoryl transfer between the nucleoside triphosphate and OAA. This chain is Phosphoenolpyruvate carboxykinase (ATP), found in Roseobacter denitrificans (strain ATCC 33942 / OCh 114) (Erythrobacter sp. (strain OCh 114)).